The sequence spans 806 residues: DNA topoisomerase 4 subunit A (806 aa).

Residues 33 to 499 (LPDARDGLKP…EEIKINLEVM (467 aa)) form the Topo IIA-type catalytic domain. Residue Tyr-121 is the O-(5'-phospho-DNA)-tyrosine intermediate of the active site.

The protein belongs to the type II topoisomerase GyrA/ParC subunit family. ParC type 2 subfamily. In terms of assembly, heterotetramer composed of ParC and ParE.

It is found in the cell membrane. The protein resides in the cytoplasm. It carries out the reaction ATP-dependent breakage, passage and rejoining of double-stranded DNA.. Its function is as follows. Topoisomerase IV is essential for chromosome segregation. It relaxes supercoiled DNA. Performs the decatenation events required during the replication of a circular DNA molecule. The chain is DNA topoisomerase 4 subunit A from Bacillus subtilis (strain 168).